The primary structure comprises 328 residues: tRNA uridine(34) hydroxylase (328 aa).

Residues 123–217 form the Rhodanese domain; sequence SDPDVLLVDT…YLEEVPQEES (95 aa). C177 functions as the Cysteine persulfide intermediate in the catalytic mechanism.

This sequence belongs to the TrhO family.

It catalyses the reaction uridine(34) in tRNA + AH2 + O2 = 5-hydroxyuridine(34) in tRNA + A + H2O. Catalyzes oxygen-dependent 5-hydroxyuridine (ho5U) modification at position 34 in tRNAs. The sequence is that of tRNA uridine(34) hydroxylase from Psychromonas ingrahamii (strain DSM 17664 / CCUG 51855 / 37).